The chain runs to 172 residues: NADH-ubiquinone oxidoreductase chain 6 (172 aa).

The next 6 membrane-spanning stretches (helical) occupy residues 1-21 (MLSL…VVVL), 25-45 (PYFS…IVLY), 48-68 (GTFL…VVFV), 86-106 (VIWF…MSFN), 108-128 (FFLD…IFGA), and 141-161 (LILV…LVVV).

Belongs to the complex I subunit 6 family.

The protein localises to the mitochondrion membrane. The enzyme catalyses a ubiquinone + NADH + 5 H(+)(in) = a ubiquinol + NAD(+) + 4 H(+)(out). Core subunit of the mitochondrial membrane respiratory chain NADH dehydrogenase (Complex I) that is believed to belong to the minimal assembly required for catalysis. Complex I functions in the transfer of electrons from NADH to the respiratory chain. The immediate electron acceptor for the enzyme is believed to be ubiquinone. This Petromyzon marinus (Sea lamprey) protein is NADH-ubiquinone oxidoreductase chain 6 (MT-ND6).